A 329-amino-acid polypeptide reads, in one-letter code: MVKTQRVVITPGEPAGIGPDLVVQLAQREWPVELVVCADATLLTDRAAMLGLPLTLRPYSPNSPAQPQTAGTLTLLPVALRESVTAGQLAIENGHYVVETLARACDGCLNGEFAALITGPVHKGVINDAGIPFTGHTEFFEERSQAKKVVMMLATEELRVALATTHLPLRDIADAITPALLHEVIAILHHDLRTKFGIAEPRILVCGLNPHAGEGGHMGTEEIDTIIPVLNELRAQGMKLNGPLPADTLFQPKYLDNADAVLAMYHDQGLPVLKYQGFGRGVNITLGLPFIRTSVDHGTALELAGRGEADVGSFITALNLAIKMIVNTQ.

Substrate contacts are provided by His-136 and Thr-137. Residues His-166, His-211, and His-266 each coordinate a divalent metal cation. Substrate contacts are provided by Lys-274, Asn-283, and Arg-292.

The protein belongs to the PdxA family. As to quaternary structure, homodimer. Zn(2+) is required as a cofactor. Mg(2+) serves as cofactor. The cofactor is Co(2+).

It localises to the cytoplasm. It carries out the reaction 4-(phosphooxy)-L-threonine + NAD(+) = 3-amino-2-oxopropyl phosphate + CO2 + NADH. Its pathway is cofactor biosynthesis; pyridoxine 5'-phosphate biosynthesis; pyridoxine 5'-phosphate from D-erythrose 4-phosphate: step 4/5. Its function is as follows. Catalyzes the NAD(P)-dependent oxidation of 4-(phosphooxy)-L-threonine (HTP) into 2-amino-3-oxo-4-(phosphooxy)butyric acid which spontaneously decarboxylates to form 3-amino-2-oxopropyl phosphate (AHAP). The sequence is that of 4-hydroxythreonine-4-phosphate dehydrogenase from Shigella sonnei (strain Ss046).